Here is a 647-residue protein sequence, read N- to C-terminus: Threonine--tRNA ligase (647 aa).

The region spanning 1-63 (MDKINITFPD…EEDGSIEIVT (63 aa)) is the TGS domain. A catalytic region spans residues 242 to 540 (DHRKIGKELD…LTEETKGAFP (299 aa)). Residues Cys336, His387, and His517 each coordinate Zn(2+).

This sequence belongs to the class-II aminoacyl-tRNA synthetase family. In terms of assembly, homodimer. The cofactor is Zn(2+).

Its subcellular location is the cytoplasm. It carries out the reaction tRNA(Thr) + L-threonine + ATP = L-threonyl-tRNA(Thr) + AMP + diphosphate + H(+). Functionally, catalyzes the attachment of threonine to tRNA(Thr) in a two-step reaction: L-threonine is first activated by ATP to form Thr-AMP and then transferred to the acceptor end of tRNA(Thr). Also edits incorrectly charged L-seryl-tRNA(Thr). The polypeptide is Threonine--tRNA ligase (Staphylococcus carnosus (strain TM300)).